The sequence spans 352 residues: RNA demethylase ALKBH5 (352 aa).

The segment covering 18 to 34 has biased composition (basic and acidic residues); that stretch reads RDKVFEYSNGEKRKYRE. Residues 18–47 form a disordered region; it reads RDKVFEYSNGEKRKYRESDDDESEYEERRD. Tyr107 is an active-site residue. 3 residues coordinate 2-oxoglutarate: Asn161, Tyr163, and His172. The Fe cation site is built by His172, Asp174, and His234. Cys198 and Cys235 are joined by a disulfide. Residues His234 and Arg245 each coordinate 2-oxoglutarate. The segment at 260–352 is disordered; that stretch reads LDSNSLSPSI…PTRRVKMRRH (93 aa). Over residues 272–285 the composition is skewed to basic residues; that stretch reads PKRRHILKAKRSHR. Basic and acidic residues-rich tracts occupy residues 286–306 and 315–343; these read KADP…ELQR and RHDD…DHAP.

Belongs to the alkB family. In terms of assembly, monomer. Fe(2+) is required as a cofactor.

It is found in the nucleus speckle. It carries out the reaction an N(6)-methyladenosine in mRNA + 2-oxoglutarate + O2 = an adenosine in mRNA + formaldehyde + succinate + CO2. In terms of biological role, dioxygenase that specifically demethylates N(6)-methyladenosine (m6A) RNA, the most prevalent internal modification of messenger RNA (mRNA) in higher eukaryotes. Demethylates RNA by oxidative demethylation, which requires molecular oxygen, alpha-ketoglutarate and iron. Demethylation of m6A mRNA affects mRNA processing, translation and export. This Danio rerio (Zebrafish) protein is RNA demethylase ALKBH5 (alkbh5).